Reading from the N-terminus, the 223-residue chain is Small ribosomal subunit protein uS3 (223 aa).

The KH type-2 domain occupies 39–107; sequence VRSYLAKKLS…PVHINIQEIR (69 aa).

Belongs to the universal ribosomal protein uS3 family. Part of the 30S ribosomal subunit. Forms a tight complex with proteins S10 and S14.

Binds the lower part of the 30S subunit head. Binds mRNA in the 70S ribosome, positioning it for translation. This Nitrosococcus oceani (strain ATCC 19707 / BCRC 17464 / JCM 30415 / NCIMB 11848 / C-107) protein is Small ribosomal subunit protein uS3.